Reading from the N-terminus, the 442-residue chain is tRNA-2-methylthio-N(6)-dimethylallyladenosine synthase (442 aa).

Positions 5-122 (KKVFIKTLGC…LPEMIKQKQK (118 aa)) constitute an MTTase N-terminal domain. [4Fe-4S] cluster-binding residues include cysteine 14, cysteine 51, cysteine 85, cysteine 159, cysteine 163, and cysteine 166. The 234-residue stretch at 145 to 378 (KAEGAKAYVS…DLLNSNAQII (234 aa)) folds into the Radical SAM core domain. One can recognise a TRAM domain in the interval 380-442 (RQMVGTNQRI…LPNSLRGELI (63 aa)).

Belongs to the methylthiotransferase family. MiaB subfamily. As to quaternary structure, monomer. [4Fe-4S] cluster is required as a cofactor.

Its subcellular location is the cytoplasm. The catalysed reaction is N(6)-dimethylallyladenosine(37) in tRNA + (sulfur carrier)-SH + AH2 + 2 S-adenosyl-L-methionine = 2-methylsulfanyl-N(6)-dimethylallyladenosine(37) in tRNA + (sulfur carrier)-H + 5'-deoxyadenosine + L-methionine + A + S-adenosyl-L-homocysteine + 2 H(+). In terms of biological role, catalyzes the methylthiolation of N6-(dimethylallyl)adenosine (i(6)A), leading to the formation of 2-methylthio-N6-(dimethylallyl)adenosine (ms(2)i(6)A) at position 37 in tRNAs that read codons beginning with uridine. The sequence is that of tRNA-2-methylthio-N(6)-dimethylallyladenosine synthase from Francisella tularensis subsp. tularensis (strain FSC 198).